Consider the following 183-residue polypeptide: Potassium-transporting ATPase KdpC subunit (183 aa).

The helical transmembrane segment at 10-30 (ASLLVLSLVTGVAYPLLVTGI) threads the bilayer.

It belongs to the KdpC family. In terms of assembly, the system is composed of three essential subunits: KdpA, KdpB and KdpC.

It is found in the cell inner membrane. Part of the high-affinity ATP-driven potassium transport (or Kdp) system, which catalyzes the hydrolysis of ATP coupled with the electrogenic transport of potassium into the cytoplasm. This subunit acts as a catalytic chaperone that increases the ATP-binding affinity of the ATP-hydrolyzing subunit KdpB by the formation of a transient KdpB/KdpC/ATP ternary complex. The chain is Potassium-transporting ATPase KdpC subunit from Pseudomonas aeruginosa (strain UCBPP-PA14).